The chain runs to 854 residues: DNA mismatch repair protein MutS (854 aa).

615–622 (GPNMGGKS) is a binding site for ATP.

It belongs to the DNA mismatch repair MutS family.

Its function is as follows. This protein is involved in the repair of mismatches in DNA. It is possible that it carries out the mismatch recognition step. This protein has a weak ATPase activity. The protein is DNA mismatch repair protein MutS of Aliivibrio fischeri (strain ATCC 700601 / ES114) (Vibrio fischeri).